Consider the following 837-residue polypeptide: Protein translocase subunit SecA (837 aa).

ATP is bound by residues Gln-87, Gly-105 to Thr-109, and Asp-494. Residues His-788 to Lys-837 are disordered. The Zn(2+) site is built by Cys-823, Cys-825, Cys-834, and Cys-835.

This sequence belongs to the SecA family. As to quaternary structure, monomer and homodimer. Part of the essential Sec protein translocation apparatus which comprises SecA, SecYEG and auxiliary proteins SecDF-YajC and YidC. Requires Zn(2+) as cofactor.

The protein localises to the cell inner membrane. The protein resides in the cytoplasm. It carries out the reaction ATP + H2O + cellular proteinSide 1 = ADP + phosphate + cellular proteinSide 2.. In terms of biological role, part of the Sec protein translocase complex. Interacts with the SecYEG preprotein conducting channel. Has a central role in coupling the hydrolysis of ATP to the transfer of proteins into and across the cell membrane, serving as an ATP-driven molecular motor driving the stepwise translocation of polypeptide chains across the membrane. This Maridesulfovibrio salexigens (strain ATCC 14822 / DSM 2638 / NCIMB 8403 / VKM B-1763) (Desulfovibrio salexigens) protein is Protein translocase subunit SecA.